Here is a 387-residue protein sequence, read N- to C-terminus: 23S rRNA (uracil(747)-C(5))-methyltransferase RlmC (387 aa).

[4Fe-4S] cluster contacts are provided by Cys3, Cys11, Cys14, and Cys86. Gln211, Phe240, Glu269, and Asn319 together coordinate S-adenosyl-L-methionine. Catalysis depends on Cys346, which acts as the Nucleophile.

It belongs to the class I-like SAM-binding methyltransferase superfamily. RNA M5U methyltransferase family. RlmC subfamily.

It carries out the reaction uridine(747) in 23S rRNA + S-adenosyl-L-methionine = 5-methyluridine(747) in 23S rRNA + S-adenosyl-L-homocysteine + H(+). Functionally, catalyzes the formation of 5-methyl-uridine at position 747 (m5U747) in 23S rRNA. The protein is 23S rRNA (uracil(747)-C(5))-methyltransferase RlmC of Pasteurella multocida (strain Pm70).